Reading from the N-terminus, the 73-residue chain is Toxin Td10 (73 aa).

An N-terminal signal peptide occupies residues 1-7 (IGMVVEC). The 63-residue stretch at 8–70 (KDGYLMGPDG…VWERATNRCG (63 aa)) folds into the LCN-type CS-alpha/beta domain. Intrachain disulfides connect Cys18-Cys69, Cys22-Cys44, Cys30-Cys50, and Cys34-Cys52. Lys71 bears the Lysine amide mark.

Belongs to the long (4 C-C) scorpion toxin superfamily. Sodium channel inhibitor family. Beta subfamily. As to expression, expressed by the venom gland.

It is found in the secreted. Beta toxins bind voltage-independently at site-4 of sodium channels (Nav) and shift the voltage of activation toward more negative potentials thereby affecting sodium channel activation and promoting spontaneous and repetitive firing. In Tityus discrepans (Venezuelan scorpion), this protein is Toxin Td10.